Consider the following 287-residue polypeptide: Phosphatidylserine decarboxylase proenzyme (287 aa).

Residues aspartate 89, histidine 146, and serine 252 each act as charge relay system; for autoendoproteolytic cleavage activity in the active site. Serine 252 serves as the catalytic Schiff-base intermediate with substrate; via pyruvic acid; for decarboxylase activity. Pyruvic acid (Ser); by autocatalysis is present on serine 252.

This sequence belongs to the phosphatidylserine decarboxylase family. PSD-B subfamily. Prokaryotic type I sub-subfamily. As to quaternary structure, heterodimer of a large membrane-associated beta subunit and a small pyruvoyl-containing alpha subunit. Pyruvate serves as cofactor. In terms of processing, is synthesized initially as an inactive proenzyme. Formation of the active enzyme involves a self-maturation process in which the active site pyruvoyl group is generated from an internal serine residue via an autocatalytic post-translational modification. Two non-identical subunits are generated from the proenzyme in this reaction, and the pyruvate is formed at the N-terminus of the alpha chain, which is derived from the carboxyl end of the proenzyme. The autoendoproteolytic cleavage occurs by a canonical serine protease mechanism, in which the side chain hydroxyl group of the serine supplies its oxygen atom to form the C-terminus of the beta chain, while the remainder of the serine residue undergoes an oxidative deamination to produce ammonia and the pyruvoyl prosthetic group on the alpha chain. During this reaction, the Ser that is part of the protease active site of the proenzyme becomes the pyruvoyl prosthetic group, which constitutes an essential element of the active site of the mature decarboxylase.

It is found in the cell membrane. The enzyme catalyses a 1,2-diacyl-sn-glycero-3-phospho-L-serine + H(+) = a 1,2-diacyl-sn-glycero-3-phosphoethanolamine + CO2. The protein operates within phospholipid metabolism; phosphatidylethanolamine biosynthesis; phosphatidylethanolamine from CDP-diacylglycerol: step 2/2. Catalyzes the formation of phosphatidylethanolamine (PtdEtn) from phosphatidylserine (PtdSer). In Shewanella woodyi (strain ATCC 51908 / MS32), this protein is Phosphatidylserine decarboxylase proenzyme.